The chain runs to 81 residues: Short neurotoxin D (81 aa).

The signal sequence occupies residues 1–21 (MKTLLLTLVVVTIVCLDLGYT). 4 disulfides stabilise this stretch: Cys-24-Cys-43, Cys-38-Cys-60, Cys-62-Cys-73, and Cys-74-Cys-79.

This sequence belongs to the three-finger toxin family. Short-chain subfamily. Type I alpha-neurotoxin sub-subfamily. As to expression, expressed by the venom gland.

The protein localises to the secreted. Binds to muscle nicotinic acetylcholine receptor (nAChR) and inhibit acetylcholine from binding to the receptor, thereby impairing neuromuscular transmission. This Aipysurus laevis (Olive sea snake) protein is Short neurotoxin D.